The sequence spans 274 residues: Large ribosomal subunit protein uL2cz/uL2cy (274 aa).

Disordered regions lie at residues 1–22 (MAIHLYKTSTPSTRNGAVDSQV) and 225–252 (PVDHPHGGGEGRAPIGRKKPVTPWGYPA).

Belongs to the universal ribosomal protein uL2 family. As to quaternary structure, part of the 50S ribosomal subunit.

It is found in the plastid. The protein resides in the chloroplast. The protein is Large ribosomal subunit protein uL2cz/uL2cy (rpl2-A) of Barbarea verna (Land cress).